A 210-amino-acid polypeptide reads, in one-letter code: SAP domain-containing ribonucleoprotein (210 aa).

N-acetylalanine is present on A2. The region spanning 8–42 is the SAP domain; that stretch reads LHKLKLAELKQECLARGLETKGIKQDLIHRLQAYL. K10 carries the N6-acetyllysine modification. Acidic residues predominate over residues 45-64; sequence HAEEEANEEDVLGDETEEEE. Positions 45 to 86 are disordered; the sequence is HAEEEANEEDVLGDETEEEETKPIELPVKEEEPPEKTVDVAA. Residues 65 to 86 show a composition bias toward basic and acidic residues; that stretch reads TKPIELPVKEEEPPEKTVDVAA. K142 bears the N6-acetyllysine mark. Residues 161–210 form a disordered region; the sequence is VSSISRKSEDDEKLKKRKERFGIVTSSAGTGTTEDTEAKKRKRAERFGIA. Residue S163 is modified to Phosphoserine. The segment covering 184 to 193 has biased composition (polar residues); that stretch reads VTSSAGTGTT.

The protein belongs to the SAP domain-containing ribonucleoprotein family. In terms of assembly, interacts with DDX39A. Interacts with FUS. Interacts (via the C-terminal domain) with DDX39B; the interaction is direct and facilitates RNA binding of DDX39B. Component of the transcription/export (TREX) complex at least composed of ALYREF/THOC4, DDX39B, SARNP/CIP29, CHTOP and the THO subcomplex; TREX seems to have dynamic structure involving ATP-dependent remodeling; in the complex interacts directly with DDX39B in a ATP-dependent manner which bridges it to ALYREF/THOC4. Low expression in spleen, liver, pancreas, testis, thymus, heart, and kidney. Increased levels are seen in hepatocellular carcinoma and pancreatic adenocarcinoma.

It localises to the nucleus. It is found in the nucleus speckle. Functionally, binds both single-stranded and double-stranded DNA with higher affinity for the single-stranded form. Specifically binds to scaffold/matrix attachment region DNA. Also binds single-stranded RNA. Enhances RNA unwinding activity of DDX39A. May participate in important transcriptional or translational control of cell growth, metabolism and carcinogenesis. Component of the TREX complex which is thought to couple mRNA transcription, processing and nuclear export, and specifically associates with spliced mRNA and not with unspliced pre-mRNA. The TREX complex is recruited to spliced mRNAs by a transcription-independent mechanism, binds to mRNA upstream of the exon-junction complex (EJC) and is recruited in a splicing- and cap-dependent manner to a region near the 5' end of the mRNA where it functions in mRNA export to the cytoplasm via the TAP/NXF1 pathway. Associates with DDX39B, which facilitates RNA binding of DDX39B and likely plays a role in mRNA export. This is SAP domain-containing ribonucleoprotein (SARNP) from Homo sapiens (Human).